The sequence spans 582 residues: Myoneurin (582 aa).

The BTB domain occupies 24 to 89 (CDCTIVIGEF…IYTGTLNLDS (66 aa)). The disordered stretch occupies residues 169-197 (QGALAKKSSQTKKKKKAFNSPKTGQNKTV). Short sequence motifs (nuclear localization signal) lie at residues 174–190 (KKSSQTKKKKKAFNSPK) and 257–262 (KRKRGK). Polar residues predominate over residues 188 to 197 (SPKTGQNKTV). S289 is subject to Phosphoserine. The C2H2-type 1; degenerate zinc finger occupies 302 to 324 (PMCNTRGKVFSEASSLRRHMRIH). 6 C2H2-type zinc fingers span residues 330–352 (YVCHLCGKAFTQCNQLKTHVRTH), 358–381 (YKCELCDKGFAQKCQLVFHSRMHH), 387–409 (YKCDVCNLQFATSSNLKIHARKH), 415–437 (YVCDRCGQRFAQASTLTYHVRRH), 443–465 (YVCDTCGKAFAVSSSLITHSRKH), and 471–494 (FICELCGNSYTDIKNLKKHKTKVH). The disordered stretch occupies residues 489–538 (HKTKVHSGADKTPDSSAEDHTLSEQDSIQKSPLSETMDVKPSDTTLPLAL). Over residues 495–511 (SGADKTPDSSAEDHTLS) the composition is skewed to basic and acidic residues. Residues 512–522 (EQDSIQKSPLS) are compositionally biased toward polar residues.

This sequence belongs to the krueppel C2H2-type zinc-finger protein family.

It is found in the nucleus. The polypeptide is Myoneurin (MYNN) (Pongo abelii (Sumatran orangutan)).